The primary structure comprises 120 residues: VVLCFLGTGLVDMKVTQMSRYLIKRMGENVLLECGQDMSHETMYWYRQDPGLGLQLIYISYDVDSNSEGDIPKGYRVSRKKREHFSLILDSAKTNQTSVYFCAQGAPEQYFGPGTRLTVL.

The signal sequence occupies residues 1-11; that stretch reads VVLCFLGTGLV. The tract at residues 12–106 is v segment; sequence DMKVTQMSRY…TSVYFCAQGA (95 aa). Cysteine 34 and cysteine 102 are joined by a disulfide. Positions 107–120 are j segment; it reads PEQYFGPGTRLTVL.

This Mus musculus (Mouse) protein is T-cell receptor beta chain V region PHDS203.